The following is a 419-amino-acid chain: [Butirosin acyl-carrier protein]--L-glutamate ligase (419 aa).

Residues 144–345 form the ATP-grasp domain; that stretch reads RRLMERNGFN…FVESRVLVFN (202 aa). An ATP-binding site is contributed by 174–231; it reads ISAGFSKCVLKVPYGSSGKGLKVIDNERNFRFLLNYIQNRQTNVDLLLEGWHPHRLSL. Mg(2+) is bound by residues aspartate 298, glutamate 312, and asparagine 314. Mn(2+) contacts are provided by aspartate 298, glutamate 312, and asparagine 314.

As to quaternary structure, monomer. It depends on Mg(2+) as a cofactor. Requires Mn(2+) as cofactor.

It catalyses the reaction holo-[BtrI ACP] + L-glutamate + ATP = gamma-L-glutamyl-[BtrI ACP] + ADP + phosphate. It carries out the reaction 4-aminobutanoyl-[BtrI ACP] + L-glutamate + ATP = 4-(gamma-L-glutamylamino)butanoyl-[BtrI ACP] + ADP + phosphate + H(+). Its pathway is antibiotic biosynthesis; butirosin biosynthesis. In terms of biological role, ATP-dependent ligase that catalyzes 2 steps in the biosynthesis of the side chain of the aminoglycoside antibiotics in the biosynthetic pathway of butirosin. Mediates the addition of one molecule of L-glutamate to a dedicated acyl-carrier protein. Following decarboxylation of the product by BtrK, adds a second L-glutamate molecule. The protein is [Butirosin acyl-carrier protein]--L-glutamate ligase (btrJ) of Niallia circulans (Bacillus circulans).